Here is a 342-residue protein sequence, read N- to C-terminus: S-adenosylmethionine:tRNA ribosyltransferase-isomerase (342 aa).

Belongs to the QueA family. Monomer.

It is found in the cytoplasm. The catalysed reaction is 7-aminomethyl-7-carbaguanosine(34) in tRNA + S-adenosyl-L-methionine = epoxyqueuosine(34) in tRNA + adenine + L-methionine + 2 H(+). Its pathway is tRNA modification; tRNA-queuosine biosynthesis. In terms of biological role, transfers and isomerizes the ribose moiety from AdoMet to the 7-aminomethyl group of 7-deazaguanine (preQ1-tRNA) to give epoxyqueuosine (oQ-tRNA). The protein is S-adenosylmethionine:tRNA ribosyltransferase-isomerase of Streptococcus agalactiae serotype III (strain NEM316).